Consider the following 562-residue polypeptide: NAD-dependent malic enzyme (562 aa).

Tyrosine 101 functions as the Proton donor in the catalytic mechanism. Arginine 154 is a binding site for NAD(+). The Proton acceptor role is filled by lysine 172. A divalent metal cation contacts are provided by glutamate 243, aspartate 244, and aspartate 267. Aspartate 267 and asparagine 415 together coordinate NAD(+).

It belongs to the malic enzymes family. Homotetramer. Mg(2+) is required as a cofactor. Mn(2+) serves as cofactor.

It carries out the reaction (S)-malate + NAD(+) = pyruvate + CO2 + NADH. The enzyme catalyses oxaloacetate + H(+) = pyruvate + CO2. The sequence is that of NAD-dependent malic enzyme from Shewanella baltica (strain OS155 / ATCC BAA-1091).